Here is an 871-residue protein sequence, read N- to C-terminus: Pre-mRNA-processing factor 40 homolog B (871 aa).

WW domains lie at 92–125 (GPPR…KPSV) and 133–166 (LLSQ…RPKD). K148 is subject to N6-acetyllysine. Positions 171 to 277 (EVLVKQEAAG…RSGLSWSNRE (107 aa)) are disordered. K175 is covalently cross-linked (Glycyl lysine isopeptide (Lys-Gly) (interchain with G-Cter in SUMO2)). Over residues 182–191 (QQQQLPQTLQ) the composition is skewed to low complexity. The span at 192–211 (PQPPQPQPDPPPVPPGPTPV) shows a compositional bias: pro residues. 2 stretches are compositionally biased toward low complexity: residues 212-221 (PTGLLEPEPG) and 245-255 (EGPSSSGQHQP). FF domains lie at 276–330 (REKA…YKAQ), 340–397 (RLRA…VLFF), 410–470 (RRRN…HIRA), 490–550 (QRKN…YVEE), 554–610 (RFHD…LLEK), and 625–682 (RMRR…FLQV). The segment at 690 to 871 (HLHTKGRKHG…TLLQQLDDHQ (182 aa)) is disordered. The segment covering 691–711 (LHTKGRKHGRKGKKHHHKRSH) has biased composition (basic residues). Residues 739–756 (SESGSEPSSSLDSVESGG) are compositionally biased toward low complexity. S764 carries the phosphoserine modification. Residues 777–793 (RKAKKPKKKTKKRRHKS) are compositionally biased toward basic residues. Residues 803–824 (EEKAGKESDEKEQEQDKDRELQ) show a composition bias toward basic and acidic residues. S832 carries the phosphoserine modification. Residue K838 forms a Glycyl lysine isopeptide (Lys-Gly) (interchain with G-Cter in SUMO2) linkage. S852 carries the phosphoserine modification.

Belongs to the PRPF40 family. As to quaternary structure, interacts with the N-terminus of HD. Expressed in the striatum and cortex of the brain (at protein level). Highly expressed in testis, fetal kidney and fetal brain. Moderately expressed in pancreas, skeletal muscle, placenta, brain and heart. Weakly expressed in colon, ileum, ovary, prostate, spleen, kidney and fetal lung.

It localises to the nucleus speckle. In terms of biological role, may be involved in pre-mRNA splicing. The chain is Pre-mRNA-processing factor 40 homolog B (PRPF40B) from Homo sapiens (Human).